The primary structure comprises 566 residues: Phosphatidylinositol 3,4,5-trisphosphate 3-phosphatase TPTE2 (566 aa).

4 helical membrane-spanning segments follow: residues 135–155 (SFAF…LLLA), 173–193 (ISLA…FVEG), 208–228 (AIIV…IKFL), and 234–254 (WIHL…HLIH). The Phosphatase tensin-type domain maps to 272–448 (RRYTRDGFDL…GYFAQVKHLY (177 aa)). Cys-382 functions as the Phosphocysteine intermediate in the catalytic mechanism. A C2 tensin-type domain is found at 455 to 566 (RRILFIKRFI…ILHSFRLVFT (112 aa)).

The protein resides in the endoplasmic reticulum membrane. Its subcellular location is the golgi apparatus membrane. The enzyme catalyses a 1,2-diacyl-sn-glycero-3-phospho-(1D-myo-inositol-3,4,5-trisphosphate) + H2O = a 1,2-diacyl-sn-glycero-3-phospho-(1D-myo-inositol-4,5-bisphosphate) + phosphate. Functionally, acts as a lipid phosphatase, removing the phosphate in the D3 position of the inositol ring from phosphatidylinositol 3,4,5-trisphosphate. This is Phosphatidylinositol 3,4,5-trisphosphate 3-phosphatase TPTE2 (TPTE2) from Macaca fascicularis (Crab-eating macaque).